A 146-amino-acid polypeptide reads, in one-letter code: Histone H2A.1 (146 aa).

M1 is modified (N-acetylmethionine). A disordered region spans residues 1-24 (MDATKTTKGAGGRKGGPRKKSVTK). Residues 142–145 (SPKK) carry the SPKK motif motif.

It belongs to the histone H2A family. As to quaternary structure, the nucleosome is a histone octamer containing two molecules each of H2A, H2B, H3 and H4 assembled in one H3-H4 heterotetramer and two H2A-H2B heterodimers. The octamer wraps approximately 147 bp of DNA. As to expression, high expression in meristematic tissues, in cells of the root pericycle and in shoot cortical cells undergoing endoduplication of their DNA.

The protein localises to the nucleus. The protein resides in the chromosome. Core component of nucleosome. Nucleosomes wrap and compact DNA into chromatin, limiting DNA accessibility to the cellular machineries which require DNA as a template. Histones thereby play a central role in transcription regulation, DNA repair, DNA replication and chromosomal stability. DNA accessibility is regulated via a complex set of post-translational modifications of histones, also called histone code, and nucleosome remodeling. The sequence is that of Histone H2A.1 from Solanum lycopersicum (Tomato).